Consider the following 193-residue polypeptide: Copper-binding lipoprotein NosL (193 aa).

The signal sequence occupies residues 1–19 (MRTRLRFVLVAAALALLSA). C20 carries the N-palmitoyl cysteine lipid modification. Residue C20 is the site of S-diacylglycerol cysteine attachment.

This sequence belongs to the NosL family. In terms of assembly, monomer. Apo-NosL can form homodimers.

Its subcellular location is the cell membrane. May act as a metallochaperone involved in nitrous oxide reductase assembly. Specifically binds Cu(+). The sequence is that of Copper-binding lipoprotein NosL from Achromobacter cycloclastes.